The sequence spans 96 residues: Neutrophil defensin 8 (96 aa).

Positions 1–19 (MRTLVILAAILLVALQAQA) are cleaved as a signal peptide. The propeptide occupies 20–66 (EPLQARTDEATAAQEQIPTDNPEVVVSLAWDESLAPKDSVPGLRKNM). Cystine bridges form between cysteine 68–cysteine 96, cysteine 70–cysteine 85, and cysteine 75–cysteine 95.

The protein belongs to the alpha-defensin family.

It is found in the secreted. In terms of biological role, probable antibiotic and antifungal activity. The polypeptide is Neutrophil defensin 8 (Macaca mulatta (Rhesus macaque)).